The primary structure comprises 252 residues: Hydroxyacylglutathione hydrolase (252 aa).

Histidine 54, histidine 56, aspartate 58, histidine 59, histidine 111, aspartate 128, and histidine 166 together coordinate Zn(2+).

This sequence belongs to the metallo-beta-lactamase superfamily. Glyoxalase II family. In terms of assembly, monomer. Requires Zn(2+) as cofactor.

The enzyme catalyses an S-(2-hydroxyacyl)glutathione + H2O = a 2-hydroxy carboxylate + glutathione + H(+). It participates in secondary metabolite metabolism; methylglyoxal degradation; (R)-lactate from methylglyoxal: step 2/2. Functionally, thiolesterase that catalyzes the hydrolysis of S-D-lactoyl-glutathione to form glutathione and D-lactic acid. The protein is Hydroxyacylglutathione hydrolase of Photobacterium profundum (strain SS9).